The sequence spans 570 residues: MSKQLIPGPVEGPLADNERLKRESDHLRGTIAQDLTDPLTGGFNGDNFQLIRFHGMYQQDDRDIRPERTAQKLEPLHNVMLRARLPGGIITPAQWQVIDKFAEDHSLYGSIRLTTRQTFQFHGVLKRDIKMMHQTLNSTGIDSIATAGDVNRNVLCTSNPVESELHQEAYEWAKKISEHLLPKTRAYVEIWLDGEKLGGDEEPILGSNYLPRKFKTTVVIPPHNDVDIHANDLNFVAISDHGKLVGFNVLVGGGLAMTHGDTSTYPRKASDFGFVPLSHVLEVAAAVVSTQRDWGNRVNRKNAKTKYTLERVGVEAFKAEVESRAGIQFGPVRPYEFTSRGDRFGWVEGIDGKHHLTLFIENGRLLDFPGKPLKTGMLEIAKVHQGDFRLTANQNLIIAGVPAGEKARIEALARQYGLLDDGVSEQRKQSMACVALPTCPLAMAEAERMLPAFVTDIEGLLAKHELANDAIIFRVTGCPNGCGRAMLAEVGLVGKAPGRYNLHLGGNLEGTRIPRLHLENITEPQILAELDALIGRWAKDRNAGECFGDFVIRAGIIAPVIDSARDFYAA.

Residues Cys433, Cys439, Cys478, and Cys482 each contribute to the [4Fe-4S] cluster site. Residue Cys482 participates in siroheme binding.

Belongs to the nitrite and sulfite reductase 4Fe-4S domain family. In terms of assembly, alpha(8)-beta(8). The alpha component is a flavoprotein, the beta component is a hemoprotein. The cofactor is siroheme. It depends on [4Fe-4S] cluster as a cofactor.

It catalyses the reaction hydrogen sulfide + 3 NADP(+) + 3 H2O = sulfite + 3 NADPH + 4 H(+). The protein operates within sulfur metabolism; hydrogen sulfide biosynthesis; hydrogen sulfide from sulfite (NADPH route): step 1/1. Functionally, component of the sulfite reductase complex that catalyzes the 6-electron reduction of sulfite to sulfide. This is one of several activities required for the biosynthesis of L-cysteine from sulfate. The sequence is that of Sulfite reductase [NADPH] hemoprotein beta-component from Aeromonas hydrophila subsp. hydrophila (strain ATCC 7966 / DSM 30187 / BCRC 13018 / CCUG 14551 / JCM 1027 / KCTC 2358 / NCIMB 9240 / NCTC 8049).